A 100-amino-acid chain; its full sequence is Urease subunit gamma (100 aa).

The protein belongs to the urease gamma subunit family. As to quaternary structure, heterotrimer of UreA (gamma), UreB (beta) and UreC (alpha) subunits. Three heterotrimers associate to form the active enzyme.

It localises to the cytoplasm. The enzyme catalyses urea + 2 H2O + H(+) = hydrogencarbonate + 2 NH4(+). The protein operates within nitrogen metabolism; urea degradation; CO(2) and NH(3) from urea (urease route): step 1/1. In Synechococcus sp. (strain RCC307), this protein is Urease subunit gamma.